Consider the following 408-residue polypeptide: Na(+)-translocating NADH-quinone reductase subunit F (408 aa).

The helical transmembrane segment at 6–26 (IILGVVMFTAIVLALVAIILA) threads the bilayer. One can recognise a 2Fe-2S ferredoxin-type domain in the interval 35-127 (GDVTIRINGE…DMDVEVPEEV (93 aa)). [2Fe-2S] cluster is bound by residues Cys70, Cys76, Cys79, and Cys111. An FAD-binding FR-type domain is found at 130–270 (VKAWECTVES…YGPFGEFFAK (141 aa)).

The protein belongs to the NqrF family. As to quaternary structure, composed of six subunits; NqrA, NqrB, NqrC, NqrD, NqrE and NqrF. It depends on [2Fe-2S] cluster as a cofactor. FAD serves as cofactor.

It localises to the cell inner membrane. The catalysed reaction is a ubiquinone + n Na(+)(in) + NADH + H(+) = a ubiquinol + n Na(+)(out) + NAD(+). Its function is as follows. NQR complex catalyzes the reduction of ubiquinone-1 to ubiquinol by two successive reactions, coupled with the transport of Na(+) ions from the cytoplasm to the periplasm. The first step is catalyzed by NqrF, which accepts electrons from NADH and reduces ubiquinone-1 to ubisemiquinone by a one-electron transfer pathway. This is Na(+)-translocating NADH-quinone reductase subunit F from Marinomonas sp. (strain MWYL1).